The primary structure comprises 879 residues: DNA mismatch repair protein MutS (879 aa).

ATP is bound at residue 629-636 (GPNMAGKS). A disordered region spans residues 824–845 (VGGQPQKELSEHKPHQPSLFAP).

The protein belongs to the DNA mismatch repair MutS family.

Its function is as follows. This protein is involved in the repair of mismatches in DNA. It is possible that it carries out the mismatch recognition step. This protein has a weak ATPase activity. The chain is DNA mismatch repair protein MutS from Desulfotalea psychrophila (strain LSv54 / DSM 12343).